Reading from the N-terminus, the 397-residue chain is Aromatic-amino-acid aminotransferase (397 aa).

Gly34, Tyr66, Trp131, and Asn184 together coordinate substrate. N6-(pyridoxal phosphate)lysine is present on Lys247. Residues Arg281 and Arg375 each contribute to the substrate site.

Belongs to the class-I pyridoxal-phosphate-dependent aminotransferase family. In terms of assembly, homodimer. Pyridoxal 5'-phosphate serves as cofactor.

The protein resides in the cytoplasm. It catalyses the reaction an aromatic L-alpha-amino acid + 2-oxoglutarate = an aromatic oxo-acid + L-glutamate. The enzyme catalyses (3S)-3-methyl-L-phenylalanine + 2-oxoglutarate = (3S)-2-oxo-3-phenylbutanoate + L-glutamate. It participates in amino-acid biosynthesis; L-phenylalanine biosynthesis; L-phenylalanine from phenylpyruvate (ArAT route): step 1/1. Its pathway is amino-acid biosynthesis; L-tyrosine biosynthesis; L-tyrosine from (4-hydroxyphenyl)pyruvate: step 1/1. Functionally, broad-specificity enzyme that catalyzes the transamination of 2-ketoisocaproate, p-hydroxyphenylpyruvate, and phenylpyruvate to yield leucine, tyrosine, and phenylalanine, respectively. In vitro, is able to catalyze the conversion of beta-methyl phenylpyruvate to the nonproteinogenic amino acid (2S,3S)-beta-methyl-phenylalanine, a building block of the antibiotic mannopeptimycin produced by Streptomyces hygroscopicus NRRL3085. The polypeptide is Aromatic-amino-acid aminotransferase (tyrB) (Escherichia coli (strain K12)).